Consider the following 332-residue polypeptide: Protein EXORDIUM-like 6 (332 aa).

Positions 1–27 are cleaved as a signal peptide; it reads MAMASASSSSSSISVIIFLLLAPLCLS. N-linked (GlcNAc...) asparagine glycosylation is found at Asn-36, Asn-102, and Asn-143.

The protein belongs to the EXORDIUM family.

It is found in the secreted. It localises to the extracellular space. The protein localises to the apoplast. Its function is as follows. May play a role in a brassinosteroid-dependent regulation of growth and development. This Arabidopsis thaliana (Mouse-ear cress) protein is Protein EXORDIUM-like 6 (EXL6).